Consider the following 288-residue polypeptide: Ribosomal RNA small subunit methyltransferase A (288 aa).

Residues Asn18, Leu20, Gly45, Glu66, Asp91, and Asn118 each coordinate S-adenosyl-L-methionine.

Belongs to the class I-like SAM-binding methyltransferase superfamily. rRNA adenine N(6)-methyltransferase family. RsmA subfamily.

It localises to the cytoplasm. It catalyses the reaction adenosine(1518)/adenosine(1519) in 16S rRNA + 4 S-adenosyl-L-methionine = N(6)-dimethyladenosine(1518)/N(6)-dimethyladenosine(1519) in 16S rRNA + 4 S-adenosyl-L-homocysteine + 4 H(+). In terms of biological role, specifically dimethylates two adjacent adenosines (A1518 and A1519) in the loop of a conserved hairpin near the 3'-end of 16S rRNA in the 30S particle. May play a critical role in biogenesis of 30S subunits. The protein is Ribosomal RNA small subunit methyltransferase A of Pasteurella multocida (strain Pm70).